Reading from the N-terminus, the 224-residue chain is Cytidylate kinase (224 aa).

9-17 (GPSGSGKGT) contributes to the ATP binding site.

It belongs to the cytidylate kinase family. Type 1 subfamily.

The protein resides in the cytoplasm. It carries out the reaction CMP + ATP = CDP + ADP. The catalysed reaction is dCMP + ATP = dCDP + ADP. The polypeptide is Cytidylate kinase (Saccharophagus degradans (strain 2-40 / ATCC 43961 / DSM 17024)).